A 213-amino-acid polypeptide reads, in one-letter code: Gas vesicle protein F1 (213 aa).

It belongs to the gas vesicle GvpF/GvpL family. Binds GvpA1 in early growth stages; is the only one of GvpF1 to GvpM1 that interacts with GvpA1 in H.volcanii experiments. GvpF to GvpM interact with each other in vitro, and may form multi-subunit complex(es). Interacts with GvpC1 and GvpO1.

It is found in the gas vesicle. It localises to the cytoplasm. Might be involved in preventing aggregation of GvpA1. Proteins GvpF to GvpM might be involved in nucleating gas vesicle formation. A minor component of the gas vesicle, also found in soluble extracts. Gas vesicles are hollow, gas filled proteinaceous nanostructures found in several microbial planktonic microorganisms. They allow positioning of halobacteria at the optimal depth for growth in the poorly aerated, shallow brine pools of their habitat. Its function is as follows. Expression of a 9.5 kb p-vac DNA fragment containing 2 divergently transcribed regions (gvpD-gvpE-gvpF-gvpG-gvpH-gvpI-gvpJ-gvpK-gvpL-gvpM and gvpA-gvpC-gvpN-gvpO) allows H.volcanii to produce gas vesicles. A minimal gas vesicle can be made in H.volcanii by gvpA1-gvpO1 plus gvpF1-gvpG1-gvpJ1-gvpK1-gvpL1-gvpM1; lack of enough GvpJ1 prevents formation. The same region restores gas vesicle production in H.halobium without the p-vac locus. The polypeptide is Gas vesicle protein F1 (gvpF11) (Halobacterium salinarum (strain ATCC 700922 / JCM 11081 / NRC-1) (Halobacterium halobium)).